A 1483-amino-acid polypeptide reads, in one-letter code: Cystic fibrosis transmembrane conductance regulator (1483 aa).

Residues 1-77 (MQRSPLEKAS…KLINALRRCF (77 aa)) lie on the Cytoplasmic side of the membrane. Residues 78–98 (FWRFAFYGILLYLGEVTKAVQ) traverse the membrane as a helical segment. The 285-residue stretch at 81–365 (FAFYGILLYL…WAVQTWYDSL (285 aa)) folds into the ABC transmembrane type-1 1 domain. At 99 to 122 (PLLLGRIIASYDPDNKQERSIAIY) the chain is on the extracellular side. The helical transmembrane segment at 123-146 (LAIGLCLLFIMRPLLLHPAIFGLH) threads the bilayer. Topologically, residues 147-195 (HIGMQIRIAMFSLIYKKTLKLSSRVLDKISIGQLVSLLSNNLNKFDEGL) are cytoplasmic. A helical membrane pass occupies residues 196–216 (ALAHFVWIAPLQVTLLMGLLW). At 217–222 (DLLQAS) the chain is on the extracellular side. Residues 223 to 243 (AFCGLAFLIVLALVQAGLGRM) traverse the membrane as a helical segment. Residues 244-298 (IMKYRDQRAGKINERLVITSEVIENIQSVKAYCWEEAMEKIIENIRQTELKLTRK) lie on the Cytoplasmic side of the membrane. A helical transmembrane segment spans residues 299–319 (AAHVRYFNSSAFFFSGFFVVS). Topologically, residues 320–339 (LSVLPYALIKTIILRKIFTT) are extracellular. A helical membrane pass occupies residues 340–358 (ISFCIVLRMAVTRQFPWAV). The Cytoplasmic portion of the chain corresponds to 359-859 (QTWYDSLGAI…YLRYITVHKN (501 aa)). ATP-binding positions include Trp-401, Ser-434, 458–465 (GSTGAGKT), and Gln-493. The ABC transporter 1 domain occupies 423–646 (NGDNSLFFSN…RPDFSSKLMG (224 aa)). Cys-524 is lipidated: S-palmitoyl cysteine. A phosphoserine mark is found at Ser-549 and Ser-660. Residues 654–832 (SPERRNSIIT…EEINEEDLKE (179 aa)) form a disordered R region region. Ser-670 is subject to Phosphoserine; by PKA. Ser-686 carries the phosphoserine modification. A Glycyl lysine isopeptide (Lys-Gly) (interchain with G-Cter in ubiquitin) cross-link involves residue Lys-688. A phosphoserine mark is found at Ser-700 and Ser-712. Thr-717 is subject to Phosphothreonine. Phosphoserine is present on residues Ser-737, Ser-768, Ser-791, Ser-796, and Ser-814. The chain crosses the membrane as a helical span at residues 860–880 (LIFVLIWCLVIFLAEVAVSLV). The region spanning 860–1156 (LIFVLIWCLV…AVNSSIEVDS (297 aa)) is the ABC transmembrane type-1 2 domain. Residues 881 to 919 (VLWILRNLSSQDKGNSTQSVNSSYAVIFTSTSAYYIFYI) are Extracellular-facing. N-linked (GlcNAc...) asparagine glycosylation is found at Asn-887, Asn-895, and Asn-901. A discontinuously helical membrane pass occupies residues 920–940 (YVGVADTLLALGLFRGLPLVH). The Cytoplasmic segment spans residues 941–991 (TLITVSKILHHKMLHSVLQAPMSTLNTLKAGGILNRFSKDIAILDDLLPLT). Residues 992–1012 (IFDFIQLLLIVIGAVAVVSVL) traverse the membrane as a helical segment. The Extracellular portion of the chain corresponds to 1013 to 1014 (QP). The helical transmembrane segment at 1015 to 1035 (YIFLATVPVIAAFIILRAYFL) threads the bilayer. Over 1036-1096 (HTSQQLKQLE…TANWFLYLST (61 aa)) the chain is Cytoplasmic. A helical transmembrane segment spans residues 1097–1117 (LRWFQMRMEIIFVIFFIAVTF). Over 1118-1131 (ISILTTGEGEGTVG) the chain is Extracellular. The chain crosses the membrane as a helical span at residues 1132-1152 (IILTLAMNIMGTLQWAVNSSI). The Cytoplasmic segment spans residues 1153–1483 (EVDSLMRSVS…TEDEVQDTRL (331 aa)). In terms of domain architecture, ABC transporter 2 spans 1213-1446 (MTVKDLTAKY…RSAFRQAIGP (234 aa)). Residues Tyr-1222 and 1247–1254 (GRTGSGKS) each bind ATP. An interaction with GORASP2 region spans residues 1389–1483 (RTLKQAFADC…TEDEVQDTRL (95 aa)). Cys-1398 carries the S-palmitoyl cysteine lipid modification. The disordered stretch occupies residues 1444-1483 (IGPPERPGLLPHRLSSRQRSPSRIAALKEETEDEVQDTRL). Ser-1459 is subject to Phosphoserine. The span at 1473 to 1483 (ETEDEVQDTRL) shows a compositional bias: acidic residues. Residues 1481–1483 (TRL) carry the PDZ-binding motif.

It belongs to the ABC transporter superfamily. ABCC family. CFTR transporter (TC 3.A.1.202) subfamily. In terms of assembly, monomer; does not require oligomerization for channel activity. May form oligomers in the membrane. Interacts with SLC26A3, SLC26A6 and NHERF1. Interacts with SHANK2. Interacts with MYO6. Interacts (via C-terminus) with GOPC (via PDZ domain); this promotes CFTR internalization and thereby decreases channel activity. Interacts with SLC4A7 through NHERF1. Found in a complex with MYO5B and RAB11A. Interacts with ANO1. Interacts with SLC26A8. Interacts with AHCYL1; the interaction increases CFTR activity. Interacts with CSE1L. The core-glycosylated form interacts with GORASP2 (via PDZ GRASP-type 1 domain) in respone to ER stress. Interacts with MARCHF2; the interaction leads to CFTR ubiqtuitination and degradation. Interacts with ADGRG2. N-glycosylated. In terms of processing, phosphorylated; cAMP treatment promotes phosphorylation and activates the channel. Dephosphorylation decreases the ATPase activity (in vitro). Phosphorylation at PKA sites activates the channel. Phosphorylation at PKC sites enhances the response to phosphorylation by PKA. Phosphorylated by AMPK; this inhibits channel activity. Post-translationally, ubiquitinated, leading to its degradation in the lysosome. Deubiquitination by USP10 in early endosomes enhances its endocytic recycling to the cell membrane. Ubiquitinated by RNF185 during ER stress. Ubiquitinated by MARCHF2.

Its subcellular location is the apical cell membrane. It localises to the early endosome membrane. The protein resides in the cell membrane. The protein localises to the recycling endosome membrane. It is found in the endoplasmic reticulum membrane. Its subcellular location is the nucleus. It carries out the reaction ATP + H2O + closed Cl(-) channel = ADP + phosphate + open Cl(-) channel.. It catalyses the reaction chloride(in) = chloride(out). The enzyme catalyses hydrogencarbonate(in) = hydrogencarbonate(out). The catalysed reaction is ATP + H2O = ADP + phosphate + H(+). Its function is as follows. Epithelial ion channel that plays an important role in the regulation of epithelial ion and water transport and fluid homeostasis. Mediates the transport of chloride ions across the cell membrane. Possesses an intrinsic ATPase activity and utilizes ATP to gate its channel; the passive flow of anions through the channel is gated by cycles of ATP binding and hydrolysis by the ATP-binding domains. The ion channel is also permeable to HCO(3)(-); selectivity depends on the extracellular chloride concentration. Exerts its function also by modulating the activity of other ion channels and transporters. Contributes to the regulation of the pH and the ion content of the epithelial fluid layer. Modulates the activity of the epithelial sodium channel (ENaC) complex, in part by regulating the cell surface expression of the ENaC complex. May regulate bicarbonate secretion and salvage in epithelial cells by regulating the transporter SLC4A7. Can inhibit the chloride channel activity of ANO1. Plays a role in the chloride and bicarbonate homeostasis during sperm epididymal maturation and capacitation. This is Cystic fibrosis transmembrane conductance regulator from Canis lupus familiaris (Dog).